The primary structure comprises 78 residues: UPF0349 protein YuzB (78 aa).

Belongs to the UPF0349 family.

The sequence is that of UPF0349 protein YuzB (yuzB) from Bacillus subtilis (strain 168).